Reading from the N-terminus, the 355-residue chain is uncharacterized protein (355 aa).

Residues 1–104 (MGTKGLPLYP…EQAKTVQGGR (104 aa)) form a disordered region. N6-acetyllysine is present on K19. Over residues 45 to 54 (EEGTDLEGDM) the composition is skewed to acidic residues. The residue at position 175 (S175) is a Phosphoserine. 2 disordered regions span residues 247-310 (PRGS…AAYK) and 325-355 (SITS…GKKP). Y293 bears the Phosphotyrosine mark. S294 bears the Phosphoserine mark. A compositionally biased stretch (polar residues) spans 325 to 334 (SITSLSSRTT). Over residues 336–348 (LPAADPFALAPFP) the composition is skewed to low complexity.

This is an uncharacterized protein from Homo sapiens (Human).